A 253-amino-acid chain; its full sequence is Vitamin B12 import ATP-binding protein BtuD (253 aa).

The 233-residue stretch at 4–236 (LQLNNVSVGT…DVLSQVFEVD (233 aa)) folds into the ABC transporter domain. 32 to 39 (GPNGAGKS) serves as a coordination point for ATP.

The protein belongs to the ABC transporter superfamily. Vitamin B12 importer (TC 3.A.1.13.1) family. As to quaternary structure, the complex is composed of two ATP-binding proteins (BtuD), two transmembrane proteins (BtuC) and a solute-binding protein (BtuF).

The protein localises to the cell inner membrane. It catalyses the reaction an R-cob(III)alamin(out) + ATP + H2O = an R-cob(III)alamin(in) + ADP + phosphate + H(+). In terms of biological role, part of the ABC transporter complex BtuCDF involved in vitamin B12 import. Responsible for energy coupling to the transport system. The polypeptide is Vitamin B12 import ATP-binding protein BtuD (Yersinia pestis).